Consider the following 409-residue polypeptide: Ubiquitin-associated domain-containing protein 1 (409 aa).

Methionine 1 is modified (N-acetylmethionine). The Ubiquitin-like domain maps to 14 to 98; that stretch reads LRLHICAADG…LLLIKKRVPS (85 aa). A disordered region spans residues 101 to 122; that stretch reads PKMADVSAEEKKKQEQKAPDKD. Residues 108–122 are compositionally biased toward basic and acidic residues; the sequence is AEEKKKQEQKAPDKD. The UBA 1 domain occupies 187-231; it reads DEDERVDETALRQLTEMGFPESRASKALRLNHMSVPQAMEWLIEH. A disordered region spans residues 239–273; it reads TPLPGHAAQAGASAAATTSSTSSEAAVGTSVEDEE. A compositionally biased stretch (low complexity) spans 245–268; the sequence is AAQAGASAAATTSSTSSEAAVGTS. In terms of domain architecture, UBA 2 spans 292-332; the sequence is RADARAVISLMEMGFDEKEVIDALRVNNNQQNAACEWLLGD. The 40-residue stretch at 357 to 396 folds into the STI1 domain; it reads NPVVQLGLTNPKTLLAFEDMLENPLNSTQWMNDPETGPVM.

Component of the KPC complex composed of RNF123/KPC1 and UBAC1/KPC2. Interacts (via ubiquitin-like domain) with RNF123. Interacts (via ubiquitin-like and UBA domains) with the proteasome via its N-terminal domain.

Its subcellular location is the cytoplasm. The protein operates within protein modification; protein ubiquitination. Functionally, non-catalytic component of the KPC complex, a E3 ubiquitin-protein ligase complex that mediates polyubiquitination of target proteins, such as CDKN1B and NFKB1. The KPC complex catalyzes polyubiquitination and proteasome-mediated degradation of CDKN1B during G1 phase of the cell cycle. The KPC complex also acts as a key regulator of the NF-kappa-B signaling by promoting maturation of the NFKB1 component of NF-kappa-B by catalyzing ubiquitination of the NFKB1 p105 precursor. Within the KPC complex, UBAC1 acts as an adapter that promotes the transfer of target proteins that have been polyubiquitinated by RNF123/KPC1 to the 26S proteasome. The polypeptide is Ubiquitin-associated domain-containing protein 1 (Ubac1) (Mus musculus (Mouse)).